Consider the following 840-residue polypeptide: Phosphatidylglycerol lysyltransferase (840 aa).

Residues 1–8 (MTQELKSK) are Cytoplasmic-facing. A helical membrane pass occupies residues 9 to 29 (LLSFFKFIFATALFIFVIFTL). Over 30–52 (YRELSHINFKETFIQFGKINRLW) the chain is Extracellular. Residues 53–73 (LVLLFAGGGLSLILLSLYDII) traverse the membrane as a helical segment. Residues 74-89 (LVKALKLKMPLIRVFR) are Cytoplasmic-facing. Residues 90 to 110 (VSYIINALNSIIGFGGFIGAG) traverse the membrane as a helical segment. At 111 to 129 (VRAFVYKNYTNDTKKLVQY) the chain is on the extracellular side. Residues 130–150 (ISIILVSMLTGLSLLSILVVL) form a helical membrane-spanning segment. Residues 151–161 (RIFNASHMIDE) lie on the Cytoplasmic side of the membrane. Residues 162–182 (ISWVRWILYIVALFLPIFIFY) form a helical membrane-spanning segment. Over 183 to 200 (TVARPVDRNNRYMGVYCT) the chain is Extracellular. The chain crosses the membrane as a helical span at residues 201–221 (VVSCVEWMAAATVLYFAALIV). Over 222–229 (DIHISFMT) the chain is Cytoplasmic. Residues 230–250 (FVGIFVIAALSGLVSFIPGGF) form a helical membrane-spanning segment. At 251–270 (GAFDLVVLLGLKSLGISEEK) the chain is on the extracellular side. A helical membrane pass occupies residues 271 to 291 (ILLALVLYRFAYYFVPVMIAL). The Cytoplasmic portion of the chain corresponds to 292 to 337 (ILSSFEFGNTAKKYLDNSKYFIPVKDFTSFLRSYQKDILAKVPSFS). The chain crosses the membrane as a helical span at residues 338–358 (LAILIFLTSIIFFINNLTIVY). Residues 359 to 366 (DGLYDGNH) are Extracellular-facing. The helical transmembrane segment at 367-387 (FAYYIALAVQTSACLLLILNV) threads the bilayer. Over 388–392 (RGIYK) the chain is Cytoplasmic. The chain crosses the membrane as a helical span at residues 393–413 (GSRRAIIYAFISIILIASATI). Residues 414-415 (YT) lie on the Extracellular side of the membrane. Residues 416 to 436 (YASFLLLSWLIIIFVLLILAY) form a helical membrane-spanning segment. The Cytoplasmic segment spans residues 437–450 (QRAQVLKRPLRFKK). The helical transmembrane segment at 451 to 471 (LAVMLLLSIFILYLNHILISG) threads the bilayer. Topologically, residues 472–489 (TLYALDVYHIEIDTSLLR) are extracellular. A helical membrane pass occupies residues 490–510 (YYFWMTIVIIMLLVGVIAWLF). Residues 511–840 (DYKYKCPHHS…LKVMRVIRHK (330 aa)) lie on the Cytoplasmic side of the membrane.

It belongs to the LPG synthase family.

The protein localises to the cell membrane. It catalyses the reaction L-lysyl-tRNA(Lys) + a 1,2-diacyl-sn-glycero-3-phospho-(1'-sn-glycerol) = a 1,2-diacyl-sn-glycero-3-phospho-1'-(3'-O-L-lysyl)-sn-glycerol + tRNA(Lys). Functionally, catalyzes the transfer of a lysyl group from L-lysyl-tRNA(Lys) to membrane-bound phosphatidylglycerol (PG), which produces lysylphosphatidylglycerol (LPG), a major component of the bacterial membrane with a positive net charge. LPG synthesis contributes to bacterial virulence as it is involved in the resistance mechanism against cationic antimicrobial peptides (CAMP) produces by the host's immune system (defensins, cathelicidins) and by the competing microorganisms (bacteriocins). In fact, the modification of anionic phosphatidylglycerol with positively charged L-lysine results in repulsion of the peptides. The sequence is that of Phosphatidylglycerol lysyltransferase (mprF) from Staphylococcus epidermidis (strain ATCC 12228 / FDA PCI 1200).